The following is a 346-amino-acid chain: Threonylcarbamoyl-AMP synthase (346 aa).

The YrdC-like domain occupies 18–205 (DPQIAQAAAL…IPVLLRPGGI (188 aa)). Thr40 is an L-threonine binding site. Positions 63 and 67 each coordinate ATP. His72 is a binding site for L-threonine. Thr123 is an ATP binding site. 2 residues coordinate L-threonine: Arg127 and Ala147. ATP is bound by residues Ser149 and Ser157. Ser187 is a binding site for L-threonine. The ATP site is built by Arg201 and Tyr240.

This sequence belongs to the SUA5 family.

The protein resides in the cytoplasm. It catalyses the reaction L-threonine + hydrogencarbonate + ATP = L-threonylcarbamoyladenylate + diphosphate + H2O. In terms of biological role, required for the formation of a threonylcarbamoyl group on adenosine at position 37 (t(6)A37) in tRNAs that read codons beginning with adenine. Catalyzes the conversion of L-threonine, HCO(3)(-)/CO(2) and ATP to give threonylcarbamoyl-AMP (TC-AMP) as the acyladenylate intermediate, with the release of diphosphate. Is also able to catalyze the reverse reaction in vitro, i.e. the formation of ATP from TC-AMP and PPi. The protein is Threonylcarbamoyl-AMP synthase (ywlC) of Bacillus subtilis (strain 168).